A 364-amino-acid polypeptide reads, in one-letter code: Coproporphyrin III ferrochelatase (364 aa).

Residues Arg29 and Tyr118 each coordinate Fe-coproporphyrin III. Residues His169 and Glu250 each contribute to the Fe(2+) site.

The protein belongs to the ferrochelatase family.

It localises to the cytoplasm. It carries out the reaction Fe-coproporphyrin III + 2 H(+) = coproporphyrin III + Fe(2+). It functions in the pathway porphyrin-containing compound metabolism; protoheme biosynthesis. Functionally, involved in coproporphyrin-dependent heme b biosynthesis. Catalyzes the insertion of ferrous iron into coproporphyrin III to form Fe-coproporphyrin III. The sequence is that of Coproporphyrin III ferrochelatase from Streptococcus pneumoniae (strain Hungary19A-6).